Reading from the N-terminus, the 419-residue chain is MLNQFPGQYSNNIFCFPPIESETKSGKKASWIICVQVVQHNTIIPITDEMFSTDVKDAVAEIFTKFFVEEGAVRISKMTRVTEGKNLGKKNATTVVHQAFKDALSKYNRHARQKRGAHTNRGMIPPMLVKYFNIIPKTFFEEETDPIVQRKRNGVRAVACQQGDGCILLYSRTEKEFLGLDNIKKELKQLYLFIDVRVYLDGELYLHRKPLQWIAGQANAKTDSSELHFYVFDCFWSDQLQMPSNKRQQLLTNIFKQKEDLTFIHQVENFSVKNVDEALRLKAQFIKEGYEGAIVRNANGPYEPGYNNYHSAHLAKLKPLLDAEFILVDYTQGKKGKDLGAILWVCELPNKKRFVVTPKHLTYADRYALFQKLTPALFKKHLYGKELTVEYAELSPKTGIPLQARAVGFREPINVLEII.

The tract at residues 1 to 120 (MLNQFPGQYS…ARQKRGAHTN (120 aa)) is NTD. The AD domain stretch occupies residues 121–317 (RGMIPPMLVK…NYHSAHLAKL (197 aa)). ATP contacts are provided by Gln-149, Lys-151, Glu-203, and Phe-232. Catalysis depends on Lys-151, which acts as the N6-AMP-lysine intermediate. Glu-203 contributes to the a divalent metal cation binding site. Glu-291 lines the a divalent metal cation pocket. The ATP site is built by Ile-294 and Lys-316. An OB domain region spans residues 318–419 (KPLLDAEFIL…REPINVLEII (102 aa)).

It belongs to the ATP-dependent DNA ligase family. A divalent metal cation serves as cofactor.

It localises to the virion. It carries out the reaction ATP + (deoxyribonucleotide)n-3'-hydroxyl + 5'-phospho-(deoxyribonucleotide)m = (deoxyribonucleotide)n+m + AMP + diphosphate.. Its function is as follows. Very low-fidelity DNA ligase that seals nicks in double-stranded DNA during DNA repair. Together with the viral repair DNA polymerase X, fills the single nucleotide gaps generated by the AP endonuclease. It is not essential for viral replication and recombination. Displays a very low adenylation activity towards DNA with 3'-dideoxy- or 3'-amino-terminated nicks compared to regular nick DNA. The sequence is that of DNA ligase (LIG) from Ornithodoros (relapsing fever ticks).